A 1231-amino-acid polypeptide reads, in one-letter code: Protein FAM193A (1231 aa).

Residues 106 to 142 (CTEDMYSTLLQRYQRSEEELRKVAEEWLECQKRIDAY) are a coiled coil. Residues 249 to 272 (DYLSEMRPPSVSSASSGSGSSSPI) are disordered. Positions 258–270 (SVSSASSGSGSSS) are enriched in low complexity. Ser-293 is modified (phosphoserine). 5 disordered regions span residues 331–405 (NGGG…QAEQ), 633–703 (QSSS…APSF), 719–789 (SFCP…NQKE), 826–845 (LTKRKEEQPKKMEQISEREG), and 860–1174 (NSSE…SSLD). The span at 355 to 365 (EADDEDADGES) shows a compositional bias: acidic residues. At Ser-648 the chain carries Phosphoserine. The span at 676–691 (LAPLPALSPSALSPAS) shows a compositional bias: low complexity. Over residues 761–773 (QQDDGDESADEDS) the composition is skewed to acidic residues. Positions 776-785 (EHSSSTSTST) are enriched in low complexity. Basic residues predominate over residues 872–881 (AAKRARHKQR). Residues 877 to 973 (RHKQRKLEEK…ATESISNSEN (97 aa)) are a coiled coil. A compositionally biased stretch (basic and acidic residues) spans 882–909 (KLEEKARLEAEARAREHLHHQEEQKQRE). The span at 910–920 (EEEDEEEEDEE) shows a compositional bias: acidic residues. Basic and acidic residues predominate over residues 921–935 (QHFKEEFQRLQELQK). Over residues 937–946 (RAAKKKKKDR) the composition is skewed to basic residues. Polar residues predominate over residues 962-979 (QAATESISNSENIHNGSL). Ser-1136 and Ser-1151 each carry phosphoserine. A compositionally biased stretch (basic residues) spans 1156–1166 (GKNKKNKKKKG).

Belongs to the FAM193 family.

This is Protein FAM193A (Fam193a) from Mus musculus (Mouse).